Reading from the N-terminus, the 419-residue chain is UDP-N-acetylglucosamine 1-carboxyvinyltransferase 2 (419 aa).

Position 22–23 (22–23 (KN)) interacts with phosphoenolpyruvate. Residue R92 participates in UDP-N-acetyl-alpha-D-glucosamine binding. D116 functions as the Proton donor in the catalytic mechanism. UDP-N-acetyl-alpha-D-glucosamine is bound by residues 121 to 125 (RPIDQ), D306, and L328.

It belongs to the EPSP synthase family. MurA subfamily.

The protein resides in the cytoplasm. It carries out the reaction phosphoenolpyruvate + UDP-N-acetyl-alpha-D-glucosamine = UDP-N-acetyl-3-O-(1-carboxyvinyl)-alpha-D-glucosamine + phosphate. Its pathway is cell wall biogenesis; peptidoglycan biosynthesis. In terms of biological role, cell wall formation. Adds enolpyruvyl to UDP-N-acetylglucosamine. This Latilactobacillus sakei subsp. sakei (strain 23K) (Lactobacillus sakei subsp. sakei) protein is UDP-N-acetylglucosamine 1-carboxyvinyltransferase 2.